The primary structure comprises 334 residues: MIPVLVAAGVAFLVTLVLGPVVIPLLHRLRFGQRVRSDGPTRHLQKTGTPTMGGVIFLFGAAAAVLVVAFLPGGVRAGWIEGLLVLAVALGFGVLGFMDDFAKVVHKRSLGLRAREKLLGQVLIAVALAVTAVFVLERGTDFLVPFSGIVVHGGLALDLGWWFFLGVTVFVVLATANAVNLTDGLDGLAAGTFAVAALAFAMIALVMDKTWVGIVLGALVGGCVGFLCYNFYPARVFMGDTGSLALGGGLSAAAVITKSELFLLIIGGVFVIETLSVIIQVIWYQLTGRRVFRMSPLHHHFELVGWSETRVVLTFWTVGLVLAVLGLAGLKGLG.

Helical transmembrane passes span 2 to 22 (IPVL…GPVV), 55 to 75 (VIFL…PGGV), 78 to 98 (GWIE…LGFM), 116 to 136 (EKLL…VFVL), 154 to 174 (GLAL…VVLA), 187 to 207 (GLAA…ALVM), 211 to 231 (WVGI…CYNF), 236 to 256 (VFMG…AAVI), 262 to 282 (FLLI…IQVI), and 311 to 331 (VVLT…AGLK).

The protein belongs to the glycosyltransferase 4 family. MraY subfamily. Mg(2+) is required as a cofactor.

The protein localises to the cell membrane. It carries out the reaction UDP-N-acetyl-alpha-D-muramoyl-L-alanyl-gamma-D-glutamyl-meso-2,6-diaminopimeloyl-D-alanyl-D-alanine + di-trans,octa-cis-undecaprenyl phosphate = di-trans,octa-cis-undecaprenyl diphospho-N-acetyl-alpha-D-muramoyl-L-alanyl-D-glutamyl-meso-2,6-diaminopimeloyl-D-alanyl-D-alanine + UMP. It participates in cell wall biogenesis; peptidoglycan biosynthesis. Functionally, catalyzes the initial step of the lipid cycle reactions in the biosynthesis of the cell wall peptidoglycan: transfers peptidoglycan precursor phospho-MurNAc-pentapeptide from UDP-MurNAc-pentapeptide onto the lipid carrier undecaprenyl phosphate, yielding undecaprenyl-pyrophosphoryl-MurNAc-pentapeptide, known as lipid I. This is Phospho-N-acetylmuramoyl-pentapeptide-transferase from Desulforudis audaxviator (strain MP104C).